Here is a 105-residue protein sequence, read N- to C-terminus: NADH-quinone oxidoreductase subunit K (105 aa).

Transmembrane regions (helical) follow at residues 9–29, 34–54, and 65–85; these read PNYY…GVLV, IVLF…LVTF, and IIAF…LAII.

The protein belongs to the complex I subunit 4L family. As to quaternary structure, NDH-1 is composed of 14 different subunits. Subunits NuoA, H, J, K, L, M, N constitute the membrane sector of the complex.

Its subcellular location is the cell membrane. It catalyses the reaction a quinone + NADH + 5 H(+)(in) = a quinol + NAD(+) + 4 H(+)(out). Its function is as follows. NDH-1 shuttles electrons from NADH, via FMN and iron-sulfur (Fe-S) centers, to quinones in the respiratory chain. The immediate electron acceptor for the enzyme in this species is believed to be a menaquinone. Couples the redox reaction to proton translocation (for every two electrons transferred, four hydrogen ions are translocated across the cytoplasmic membrane), and thus conserves the redox energy in a proton gradient. The protein is NADH-quinone oxidoreductase subunit K of Salinispora arenicola (strain CNS-205).